A 342-amino-acid chain; its full sequence is Sesquiterpene synthase MBR_09977 (342 aa).

Mg(2+)-binding residues include aspartate 91 and aspartate 96. The short motif at 91–96 is the DDXXXD motif element; the sequence is DDLFVD. Substrate is bound at residue arginine 184. Residues asparagine 230, serine 234, and glutamate 238 each contribute to the Mg(2+) site.

This sequence belongs to the terpene synthase family. The cofactor is Mg(2+).

It catalyses the reaction (2E,6E)-farnesyl diphosphate + H2O = (+)-corvol ether B + diphosphate. It carries out the reaction (2E,6E)-farnesyl diphosphate + H2O = (+)-corvol ether A + diphosphate. In terms of biological role, terpene synthase that catalyzes the conversion of (2E,6E)-farnesyl diphosphate (FPP) into sesquiterpenes which are important for fungi-environment interactions. Produces a mixture consisting of 8 sesquiterpenes including corvol ethers A and B, as well as traces of epizonarene, gamma-cadinene, delta-cadinene, alpha-cadinene, alpha-cadinol, and an unidentified sesquiterpene. The major product is corvol ether A. The polypeptide is Sesquiterpene synthase MBR_09977 (Metarhizium brunneum (strain ARSEF 3297)).